A 193-amino-acid polypeptide reads, in one-letter code: DNA dC-&gt;dU-editing enzyme APOBEC-3H (193 aa).

Residues 24-126 (YRRKTYLCYQ…WKYQQGLRHL (103 aa)) form the CMP/dCMP-type deaminase domain. Position 54 (H54) interacts with Zn(2+). The active-site Proton donor is E56. The Zn(2+) site is built by C85 and C88.

It belongs to the cytidine and deoxycytidylate deaminase family. As to quaternary structure, homodimer. The cofactor is Zn(2+). As to expression, expressed in peripheral blood mononuclear cells.

The protein resides in the cytoplasm. The catalysed reaction is a 2'-deoxycytidine in single-stranded DNA + H2O + H(+) = a 2'-deoxyuridine in single-stranded DNA + NH4(+). In terms of biological role, DNA deaminase (cytidine deaminase) which acts as an inhibitor of retrovirus replication and retrotransposon mobility via deaminase-dependent and -independent mechanisms. Selectively targets single-stranded DNA and does not deaminate double-stranded DNA or single- or double-stranded RNA. Exhibits single-stranded DNA deaminase activity (in vitro). Incorporates into the released virions of the virion infectivity factor (vif)-deficient feline immunodeficiency virus (FIV) and suppresses FIV infectivity, probably in a deaminase-dependent manner (in vitro). Induces G-to-A hypermutations in vif-deficient FIV (in vitro). The APOBEC3H/APOBEC3Z3 haplotype 5 exhibits antiviral activity against vif-proficient FIV, strains Petaluma, C36 and Shizuoka (in vitro). Does not exhibit inhibitory activity against feline leukemia virus (FeLV), feline endogenous retrovirus (RD-114 virus) or a long interspersed nuclear element-1 (LINE-1) retrotransposon (in vitro). The protein is DNA dC-&gt;dU-editing enzyme APOBEC-3H of Felis catus (Cat).